The primary structure comprises 403 residues: NADH-quinone oxidoreductase subunit D (403 aa).

The protein belongs to the complex I 49 kDa subunit family. In terms of assembly, NDH-1 is composed of 14 different subunits. Subunits NuoB, C, D, E, F, and G constitute the peripheral sector of the complex.

Its subcellular location is the cell membrane. The catalysed reaction is a quinone + NADH + 5 H(+)(in) = a quinol + NAD(+) + 4 H(+)(out). In terms of biological role, NDH-1 shuttles electrons from NADH, via FMN and iron-sulfur (Fe-S) centers, to quinones in the respiratory chain. The immediate electron acceptor for the enzyme in this species is believed to be a menaquinone. Couples the redox reaction to proton translocation (for every two electrons transferred, four hydrogen ions are translocated across the cytoplasmic membrane), and thus conserves the redox energy in a proton gradient. The chain is NADH-quinone oxidoreductase subunit D from Amoebophilus asiaticus (strain 5a2).